The primary structure comprises 134 residues: Small ribosomal subunit protein bS6 (134 aa).

This sequence belongs to the bacterial ribosomal protein bS6 family.

Its function is as follows. Binds together with bS18 to 16S ribosomal RNA. The polypeptide is Small ribosomal subunit protein bS6 (Pelodictyon phaeoclathratiforme (strain DSM 5477 / BU-1)).